Here is a 387-residue protein sequence, read N- to C-terminus: O-methyltransferase lepI (387 aa).

135–148 serves as a coordination point for substrate; sequence FENLWPVLMALPDF. The interval 175–195 is substrate binding; that stretch reads CFHWLATQPTRIANFKVLLTD. S-adenosyl-L-methionine contacts are provided by residues 227–228, D252, 275–276, and R291; these read GG and NF.

It belongs to the class I-like SAM-binding methyltransferase superfamily. Cation-independent O-methyltransferase family.

O-methyltransferase; part of the gene cluster 23 that mediates the biosynthesis of a family of 2-pyridones known as leporins. The hybrid PKS-NRPS synthetase lepA and the enoyl reductase lepG are responsible for fusion of phenylalanine with a hexaketide and subsequent release of the stable tetramic acid precursor, pre-leporin C. Because lepA lacks a designated enoylreductase (ER) domain, the required activity is provided the enoyl reductase lepG. It is possible that the dehydrogenase lepF also participates in production of pre-leporin C. Cytochrome P450 monooxygenase lepH is then required for the ring expansion step to yield leporin C. Leporin C is then presumably further oxidized by the N-hydroxylase lepD to form leporin B. LepI may possess a function in biosynthesis upstream of lepA. Leporin B is further oxidized in the presence of ferric ion to give the leporin B trimer-iron chelate, but whether or not this reaction is catalyzed by an enzyme in the pathway or by ferric ion is not determined yet. This Aspergillus flavus (strain ATCC 200026 / FGSC A1120 / IAM 13836 / NRRL 3357 / JCM 12722 / SRRC 167) protein is O-methyltransferase lepI.